A 570-amino-acid chain; its full sequence is Glutamate--tRNA ligase (570 aa).

Positions 105-115 match the 'HIGH' region motif; it reads PNPDGAFHLGN.

This sequence belongs to the class-I aminoacyl-tRNA synthetase family. Glutamate--tRNA ligase type 2 subfamily.

It localises to the cytoplasm. The enzyme catalyses tRNA(Glu) + L-glutamate + ATP = L-glutamyl-tRNA(Glu) + AMP + diphosphate. In terms of biological role, catalyzes the attachment of glutamate to tRNA(Glu) in a two-step reaction: glutamate is first activated by ATP to form Glu-AMP and then transferred to the acceptor end of tRNA(Glu). This chain is Glutamate--tRNA ligase, found in Pyrococcus horikoshii (strain ATCC 700860 / DSM 12428 / JCM 9974 / NBRC 100139 / OT-3).